Reading from the N-terminus, the 133-residue chain is Alpha-amylase inhibitor/endochitinase (133 aa).

Catalysis depends on E30, which acts as the Proton donor.

Belongs to the glycosyl hydrolase 19 family. Chitinase class I subfamily.

It carries out the reaction Random endo-hydrolysis of N-acetyl-beta-D-glucosaminide (1-&gt;4)-beta-linkages in chitin and chitodextrins.. This protein functions both as an alpha-amylase inhibitor and as a chitinase. This Coix lacryma-jobi (Job's tears) protein is Alpha-amylase inhibitor/endochitinase.